The primary structure comprises 348 residues: Protein RecA (348 aa).

An ATP-binding site is contributed by Gly66–Thr73.

The protein belongs to the RecA family.

It is found in the cytoplasm. Functionally, can catalyze the hydrolysis of ATP in the presence of single-stranded DNA, the ATP-dependent uptake of single-stranded DNA by duplex DNA, and the ATP-dependent hybridization of homologous single-stranded DNAs. It interacts with LexA causing its activation and leading to its autocatalytic cleavage. This chain is Protein RecA, found in Neisseria meningitidis serogroup A / serotype 4A (strain DSM 15465 / Z2491).